The primary structure comprises 46 residues: Apamin (46 aa).

The signal sequence occupies residues 1–27 (MISMLRCISLFLSVILITGYFVTPVMS). Disulfide bonds link Cys28/Cys38 and Cys30/Cys42. The essential for toxin activity stretch occupies residues 40 to 41 (RR). His45 is modified (histidine amide).

Expressed by the venom gland.

Its subcellular location is the secreted. Neurotoxin that blocks voltage-independent calcium-activated potassium channels (KCNN1=SK1, KCNN2=SK2, KCNN3=SK3). This chain is Apamin, found in Apis cerana cerana (Oriental honeybee).